The following is a 255-amino-acid chain: Pyrroloquinoline-quinone synthase (255 aa).

The protein belongs to the PqqC family.

It catalyses the reaction 6-(2-amino-2-carboxyethyl)-7,8-dioxo-1,2,3,4,7,8-hexahydroquinoline-2,4-dicarboxylate + 3 O2 = pyrroloquinoline quinone + 2 H2O2 + 2 H2O + H(+). It functions in the pathway cofactor biosynthesis; pyrroloquinoline quinone biosynthesis. Ring cyclization and eight-electron oxidation of 3a-(2-amino-2-carboxyethyl)-4,5-dioxo-4,5,6,7,8,9-hexahydroquinoline-7,9-dicarboxylic-acid to PQQ. The protein is Pyrroloquinoline-quinone synthase of Cereibacter sphaeroides (strain ATCC 17029 / ATH 2.4.9) (Rhodobacter sphaeroides).